We begin with the raw amino-acid sequence, 185 residues long: Adenine phosphoribosyltransferase (185 aa).

Belongs to the purine/pyrimidine phosphoribosyltransferase family. Homodimer.

Its subcellular location is the cytoplasm. The enzyme catalyses AMP + diphosphate = 5-phospho-alpha-D-ribose 1-diphosphate + adenine. The protein operates within purine metabolism; AMP biosynthesis via salvage pathway; AMP from adenine: step 1/1. Catalyzes a salvage reaction resulting in the formation of AMP, that is energically less costly than de novo synthesis. This chain is Adenine phosphoribosyltransferase, found in Corynebacterium glutamicum (strain ATCC 13032 / DSM 20300 / JCM 1318 / BCRC 11384 / CCUG 27702 / LMG 3730 / NBRC 12168 / NCIMB 10025 / NRRL B-2784 / 534).